A 280-amino-acid polypeptide reads, in one-letter code: uncharacterized protein (280 aa).

This is an uncharacterized protein from Aedes vexans (Inland floodwater mosquito).